We begin with the raw amino-acid sequence, 291 residues long: Phosphatidylglycerol--prolipoprotein diacylglyceryl transferase (291 aa).

A run of 7 helical transmembrane segments spans residues 21 to 41 (VSLH…MWLA), 60 to 80 (LLYA…VLFY), 96 to 116 (WDGG…MIIF), 130 to 150 (FIAP…FING), 198 to 218 (SQLY…NLFI), 225 to 245 (GSVS…VEFF), and 260 to 280 (ISMG…MMVW). Position 143 (R143) interacts with a 1,2-diacyl-sn-glycero-3-phospho-(1'-sn-glycerol).

This sequence belongs to the Lgt family.

Its subcellular location is the cell inner membrane. It catalyses the reaction L-cysteinyl-[prolipoprotein] + a 1,2-diacyl-sn-glycero-3-phospho-(1'-sn-glycerol) = an S-1,2-diacyl-sn-glyceryl-L-cysteinyl-[prolipoprotein] + sn-glycerol 1-phosphate + H(+). The protein operates within protein modification; lipoprotein biosynthesis (diacylglyceryl transfer). In terms of biological role, catalyzes the transfer of the diacylglyceryl group from phosphatidylglycerol to the sulfhydryl group of the N-terminal cysteine of a prolipoprotein, the first step in the formation of mature lipoproteins. This Klebsiella pneumoniae (strain 342) protein is Phosphatidylglycerol--prolipoprotein diacylglyceryl transferase.